The sequence spans 340 residues: L-galactonate-5-dehydrogenase (340 aa).

Residues cysteine 40, cysteine 65, cysteine 92, cysteine 95, cysteine 98, cysteine 106, and glutamate 146 each coordinate Zn(2+).

It belongs to the zinc-containing alcohol dehydrogenase family. It depends on Zn(2+) as a cofactor.

It catalyses the reaction L-galactonate + NAD(+) = keto-D-tagaturonate + NADH + H(+). Inhibited by EDTA. In terms of biological role, catalyzes the oxidation of L-galactonate to D-tagaturonate. Required for growth on L-galactonate as the sole carbon source. In vitro, can also use L-gulonate. The polypeptide is L-galactonate-5-dehydrogenase (lgoD) (Escherichia coli (strain K12)).